Reading from the N-terminus, the 109-residue chain is MQFLASLVSFLLVVWSVKATALPVEDRLSVHSNRDLTREREEMILKMISGLLDGSDNSLFGGEVTSMDIEEPLENKLEERAAYNALPQLPQRDRKAPCKNFFWKTFTSC.

Residues 1–16 form the signal peptide; it reads MQFLASLVSFLLVVWS. A propeptide spanning residues 17–80 is cleaved from the precursor; it reads VKATALPVED…EPLENKLEER (64 aa). Cysteines 98 and 109 form a disulfide.

It belongs to the somatostatin family.

It is found in the secreted. Functionally, somatostatin inhibits the release of somatotropin. This chain is Somatostatin-2 (sst2), found in Protopterus annectens (African lungfish).